A 401-amino-acid chain; its full sequence is tRNA(Met) cytidine acetate ligase (401 aa).

Residues 7–20 (IVEY…HLYH), Gly-102, Asn-164, and Arg-189 contribute to the ATP site.

Belongs to the TmcAL family.

It is found in the cytoplasm. It catalyses the reaction cytidine(34) in elongator tRNA(Met) + acetate + ATP = N(4)-acetylcytidine(34) in elongator tRNA(Met) + AMP + diphosphate. Functionally, catalyzes the formation of N(4)-acetylcytidine (ac(4)C) at the wobble position of elongator tRNA(Met), using acetate and ATP as substrates. First activates an acetate ion to form acetyladenylate (Ac-AMP) and then transfers the acetyl group to tRNA to form ac(4)C34. The sequence is that of tRNA(Met) cytidine acetate ligase from Thermoanaerobacter sp. (strain X514).